Here is a 149-residue protein sequence, read N- to C-terminus: Transthyretin (149 aa).

An N-terminal signal peptide occupies residues 1–20; it reads MAFHSLLLLCLAGLAFVSET. Position 32 is a sulfocysteine (C32). Residue K37 coordinates L-thyroxine. E64 is subject to 4-carboxyglutamate. L-thyroxine-binding residues include E76 and S139.

It belongs to the transthyretin family. Homotetramer. Dimer of dimers. In the homotetramer, subunits assemble around a central channel that can accommodate two ligand molecules. Interacts with RBP4. Sulfonation of the reactive cysteine Cys-32 enhances the stability of the native conformation of TTR, avoiding misassembly of the protein leading to amyloid formation.

It localises to the secreted. In terms of biological role, thyroid hormone-binding protein. Probably transports thyroxine from the bloodstream to the brain. In Notamacropus eugenii (Tammar wallaby), this protein is Transthyretin (TTR).